The chain runs to 38 residues: Large ribosomal subunit protein bL36 (38 aa).

This sequence belongs to the bacterial ribosomal protein bL36 family.

This Buchnera aphidicola subsp. Baizongia pistaciae (strain Bp) protein is Large ribosomal subunit protein bL36.